We begin with the raw amino-acid sequence, 272 residues long: Undecaprenyl-diphosphatase (272 aa).

Transmembrane regions (helical) follow at residues 4–24 (FEVI…FLPI), 43–63 (GGRV…CWLY), 86–106 (ISVL…VDFI), 109–129 (VLFS…IIFW), 145–165 (ITFK…IPGT), 186–206 (TEFS…FDLI), 222–242 (VGFV…VLFV), and 249–269 (VFAW…MFFN).

It belongs to the UppP family.

The protein resides in the cell inner membrane. The catalysed reaction is di-trans,octa-cis-undecaprenyl diphosphate + H2O = di-trans,octa-cis-undecaprenyl phosphate + phosphate + H(+). Catalyzes the dephosphorylation of undecaprenyl diphosphate (UPP). Confers resistance to bacitracin. The protein is Undecaprenyl-diphosphatase of Acinetobacter baumannii (strain AB307-0294).